The chain runs to 1471 residues: ABC multidrug transporter F (1471 aa).

Residues 1 to 19 show a composition bias toward polar residues; that stretch reads MALNSTDNRWSTGEDTPSE. A disordered region spans residues 1 to 40; sequence MALNSTDNRWSTGEDTPSEAQLPDGEERLDAAPDEKVTAE. The N-linked (GlcNAc...) asparagine glycan is linked to Asn-4. Positions 25 to 40 are enriched in basic and acidic residues; the sequence is GEERLDAAPDEKVTAE. Asn-71 and Asn-311 each carry an N-linked (GlcNAc...) asparagine glycan. The region spanning 133–387 is the ABC transporter 1 domain; the sequence is LKVPTMVRQA…FEQLGFQCPE (255 aa). A helical transmembrane segment spans residues 498-518; it reads VTLAMLIGNFFEALIIASIFY. N-linked (GlcNAc...) asparagine glycosylation is present at Asn-519. 5 consecutive transmembrane segments (helical) span residues 532–552, 578–598, 607–627, 641–661, and 751–771; these read ALLF…ILTL, FIMS…TLYF, GPFF…SMFF, LAPS…TIPV, and IIIA…ELVA. The interval 791 to 819 is disordered; the sequence is RAKQGQRDEEQPSASAVPSEKYSEAPTPV. Residues 829–1071 form the ABC transporter 2 domain; sequence FHWEDVCYDV…TLMDYFVRNG (243 aa). Residue Asn-842 is glycosylated (N-linked (GlcNAc...) asparagine). 865-872 lines the ATP pocket; sequence GVSGAGKT. The next 5 helical transmembrane spans lie at 1167–1187, 1201–1221, 1252–1272, 1288–1308, and 1326–1346; these read YLYS…FSFF, FGVF…IPTF, FAWN…PVGL, LVFL…HLLI, and IMMY…GFWI. Asn-1386, Asn-1422, and Asn-1429 each carry an N-linked (GlcNAc...) asparagine glycan. Residues 1441-1461 form a helical membrane-spanning segment; sequence FGLLWVYVAVNTFGAVFLYWL.

It belongs to the ABC transporter superfamily. ABCG family. PDR (TC 3.A.1.205) subfamily.

The protein resides in the cell membrane. The enzyme catalyses fluconazole(in) + ATP + H2O = fluconazole(out) + ADP + phosphate + H(+). It carries out the reaction itraconazole(in) + ATP + H2O = itraconazole(out) + ADP + phosphate + H(+). The efflux inhibitor FK506 impairs the transport activity. Its function is as follows. Pleiotropic ABC efflux transporter that shows a strong substrate specificity for the azole class of drugs such as lotrimazole (CLT), fluconazole (FLC), itraconazole (ITC), ketoconazole (KTC), posaconazole (POS), econazole (ECON), metconazole (MET), miconazole (MCZ), prochloraz (PCLZ), and tebuconazole (TEBZ). The chain is ABC multidrug transporter F from Aspergillus fumigatus (strain ATCC MYA-4609 / CBS 101355 / FGSC A1100 / Af293) (Neosartorya fumigata).